The primary structure comprises 215 residues: UPF0056 membrane protein BU267 (215 aa).

Transmembrane regions (helical) follow at residues 14-34 (FFIG…FTTM), 56-76 (LILL…GISI), 81-101 (IAGG…QFIK), 120-140 (VVPL…TIVW), 150-170 (LFLC…CFEA), and 189-209 (IMGL…IGAI).

It belongs to the UPF0056 (MarC) family.

The protein resides in the cell membrane. This chain is UPF0056 membrane protein BU267, found in Buchnera aphidicola subsp. Acyrthosiphon pisum (strain APS) (Acyrthosiphon pisum symbiotic bacterium).